The primary structure comprises 311 residues: Methionyl-tRNA formyltransferase (311 aa).

109 to 112 contributes to the (6S)-5,6,7,8-tetrahydrofolate binding site; the sequence is SLLP.

It belongs to the Fmt family.

The catalysed reaction is L-methionyl-tRNA(fMet) + (6R)-10-formyltetrahydrofolate = N-formyl-L-methionyl-tRNA(fMet) + (6S)-5,6,7,8-tetrahydrofolate + H(+). Functionally, attaches a formyl group to the free amino group of methionyl-tRNA(fMet). The formyl group appears to play a dual role in the initiator identity of N-formylmethionyl-tRNA by promoting its recognition by IF2 and preventing the misappropriation of this tRNA by the elongation apparatus. The protein is Methionyl-tRNA formyltransferase of Kosmotoga olearia (strain ATCC BAA-1733 / DSM 21960 / TBF 19.5.1).